Reading from the N-terminus, the 876-residue chain is E3 ubiquitin-protein ligase TRIM71 (876 aa).

The RING-type zinc-finger motif lies at cysteine 12–aspartate 90. The span at serine 26–glycine 40 shows a compositional bias: low complexity. Disordered stretches follow at residues serine 26–glycine 46 and lysine 128–leucine 192. Residues proline 137–alanine 148 show a composition bias toward gly residues. A compositionally biased stretch (low complexity) spans arginine 160–serine 182. The B box-type 1; atypical zinc-finger motif lies at glutamine 200 to phenylalanine 247. Residues cysteine 205, cysteine 208, cysteine 229, histidine 233, cysteine 286, histidine 289, cysteine 309, and histidine 314 each coordinate Zn(2+). A B box-type 2 zinc finger spans residues glutamate 281–leucine 322. 2 coiled-coil regions span residues arginine 344–lysine 373 and glutamine 399–arginine 434. One copy of the Filamin repeat lies at serine 487 to valine 588. NHL repeat units follow at residues glycine 601 to cysteine 644, histidine 648 to glutamate 691, isoleucine 695 to aspartate 738, leucine 742 to aspartate 785, alanine 789 to asparagine 832, and leucine 836 to phenylalanine 876.

This sequence belongs to the TRIM/RBCC family.

The protein localises to the cytoplasm. The protein resides in the P-body. The enzyme catalyses S-ubiquitinyl-[E2 ubiquitin-conjugating enzyme]-L-cysteine + [acceptor protein]-L-lysine = [E2 ubiquitin-conjugating enzyme]-L-cysteine + N(6)-ubiquitinyl-[acceptor protein]-L-lysine.. It functions in the pathway protein modification; protein ubiquitination. Functionally, E3 ubiquitin-protein ligase that cooperates with the microRNAs (miRNAs) machinery and promotes embryonic stem cells proliferation and maintenance. Binds to miRNAs and participates in post-transcriptional repression of transcripts. Required to maintain proliferation and prevent premature differentiation of neural progenitor cells during early neural development. The polypeptide is E3 ubiquitin-protein ligase TRIM71 (TRIM71) (Gallus gallus (Chicken)).